The sequence spans 77 residues: Putative snRNP Sm-like protein (77 aa).

The 70-residue stretch at 8 to 77 folds into the Sm domain; sequence PTLRMMLDYV…DSVVVITPAA (70 aa).

Belongs to the snRNP Sm proteins family.

The sequence is that of Putative snRNP Sm-like protein from Aeropyrum pernix (strain ATCC 700893 / DSM 11879 / JCM 9820 / NBRC 100138 / K1).